Here is a 518-residue protein sequence, read N- to C-terminus: ATP synthase subunit alpha (518 aa).

170–177 (GDRQTGKT) is an ATP binding site.

This sequence belongs to the ATPase alpha/beta chains family. As to quaternary structure, F-type ATPases have 2 components, CF(1) - the catalytic core - and CF(0) - the membrane proton channel. CF(1) has five subunits: alpha(3), beta(3), gamma(1), delta(1), epsilon(1). CF(0) has three main subunits: a(1), b(2) and c(9-12). The alpha and beta chains form an alternating ring which encloses part of the gamma chain. CF(1) is attached to CF(0) by a central stalk formed by the gamma and epsilon chains, while a peripheral stalk is formed by the delta and b chains.

It is found in the cell membrane. The enzyme catalyses ATP + H2O + 4 H(+)(in) = ADP + phosphate + 5 H(+)(out). Its function is as follows. Produces ATP from ADP in the presence of a proton gradient across the membrane. The alpha chain is a regulatory subunit. This is ATP synthase subunit alpha from Mycoplasmoides gallisepticum (strain R(low / passage 15 / clone 2)) (Mycoplasma gallisepticum).